A 181-amino-acid polypeptide reads, in one-letter code: Photosystem I assembly protein Ycf4 (181 aa).

Helical transmembrane passes span 19 to 39 (YFWA…GISS) and 62 to 82 (VMMF…LTII).

It belongs to the Ycf4 family.

The protein localises to the plastid. The protein resides in the chloroplast thylakoid membrane. Functionally, seems to be required for the assembly of the photosystem I complex. This Phaeodactylum tricornutum (strain CCAP 1055/1) protein is Photosystem I assembly protein Ycf4.